We begin with the raw amino-acid sequence, 2179 residues long: MAFPYIWALLPLICSASGLSLPNMTSTDAVVAGGGILPILVAGNPGNLGSSNMSLSGGGGLAGSSTGGQSLPDTGGGNSAGGSPAGGSSGTGGGGSNSGISGNNSAMIQGQKSNQYEKCAGPGDPGPCKQYIYKWRYEPTTNECTNFIWGGCEGNPQNRFGTEAECLFHCIGGPHTLPPFLQSTTREPSTTESSMLLGLPYTQSPAQSPDGMGGAEGGDGTTPVPIEQRGPELTFAETGQGKTFIFAKNNTFIQMDGDIIQTFQLRLCREISFQFRTRLPHGLLVYHNVKNPDRINLDPYALYVIVEKGQLKVVHVFGKHSTSVTVGESLNRDEWHSVMVRIDVHGARLIARVDNSQEEVYLKGLNHEYNYGVSTNLPSVVLVGGLSSEEKLHGVKYITESFVGCIRNVVLSSGKAASDLLPIAPLVATKHENVNEGCSDMCESRHNLCFVGSRCINHYGGISCDCFGTHYEGEHCDIYTATIITLRGASYVSYRIYDWKDRVHSSTRRISLMFRTNFDDSALFYASGESLKHQYIAASIKNQSVHVEMDFGDNVMSTVLTDDLTRGYWHNLTILHEQRTVSIILDQQQKVLELPATASGNMLFDPEIYFGGGPELHKKKGLASHNNFVGSLKYVYYNDISILYELQRGNPKVHYHGVLEAEFVENEVNVIPITYPFATSHIWWPINHAEEFNIKFDFRSSRPGAVLAYSDVTTSAGNGFWEIRLTSDKLSFDLVPDVNNNVTHSTTIKINRATSWHSVELDYKLGEIRFTVDYRHTLSQMYGLTFNIGDKLIIGSSLKSAAMGLVGCIRDIEINGHLIEPRHVVKTERVVGEVALDNCNYIDPCKRPNTCEHGGKCFVKDDRVTCDCKHTGYIGKNCHFTKYRKTCEELALLGFTKSDVYLIDIDGNGVFPPAHVKCDFQSLENATKTIVEHNLPSQVDVRSARESDFSFNIRYREFSPHMLQELISHSLYCTQYIKYDCYRAQLELHSATWFTSSAKNLTVDFLGNVKRGACPCSVNKTCVDPNQSCNCDVKENKWNSDEGYYQDPQSLGITNMYFLQQKDMDDEAQGRITLGPLECVETNTQKYVVTFTTSQSYIEVPGWRKGDIAFSFRTTGEKAILLFQPPIRPHYPSFMVALTGDDQLTFTFTLSTGTTRELVINSHRRLNGGEWHKIWIDYNQYHVRFMINTDYQMLDLLPEEEFGPFEGSMYIGGATFDLLKKLSVKAGLIGCFRGLVVNGEILDIYSYMSVHLSEIIKDCKPSCVPSPCRNGAQCKELWSSFKCVCNNPWAHIGEFCETNINEKALTFINRESFLMRNYLSVGATPVILMHGINGERDVLKGILNQDLLINLRTYDTNALVLYANDHYNNFVHLYISLNREIVFLYNYGDEIVNLTLLDDTLMASLKSIQVAIVRGEQETRMHVNEHSVSIDRGTLLLDEYANKPWSNPEKEVLSPHRPPAPPTEYFQFHVGGYDPANLLRPNVDAPALEGYIGCVRGLKIGAQLIDLADINERNIAPTQEGVLPNCQIKCDAEPCKNGGTCQEHFAEQLSTCDCEHTSFLGEFCSEEKGADFSGESTLQRKFELPGTGRVDYVRLQLAFSSFDLRRANRIMLLMQTEAERSYYLLLAITSDGYLQLEEDRDNGQTVGARIDRNFLNSARHSVYYVRNGTQSQLFIDREQVPLSEFAARVLTTGGDAGSNRVQIGGINSTDSRFAVFKSYSGCLSNIYIQVNGHVMKPLEEYMLFTKSGADNITVINPQGVRSAQCNAKFDVSEQPTQEPMVNVSMIPEPWVEEPPARVPYIPRFVYDENKQEDSTQVVFLTLTSVFVIIVICCLLEVYRSHLAYKKRIERETDEDIIWSKEQATKMHESPGVKAGLLGGVTAGSGNGLPPYTYKALPQEDKKPGNGAPLVGILKNGSATPSQPGTPTALSKNGDIASRIEEEEEEEDEAPAQKAAEKSGENEEPPAKDTTASEIKESQAQPPEQLAKDTTDASAAPKASKETEAQAEPSEPSSQLNSAQNGQLAQMEQAARGDEVQVPSLPHPIQPPDAIFMPNLPQKAQQRQPQEHKSRHKATDDTEAPKQQQQQQQQQQSFDVATNANGSSLPASRVKNPEEPGGKSPLVPMRQHHSKVTRPPPPPTLFLENSLLQRQFANPISYLGGPRLQPRSNRTSIDSILSLD.

The N-terminal stretch at M1–G18 is a signal peptide. Residues L19–Q1816 lie on the Extracellular side of the membrane. N23 and N52 each carry an N-linked (GlcNAc...) asparagine glycan. Residues G59–M107 are disordered. The segment covering T74–N97 has biased composition (gly residues). An N-linked (GlcNAc...) asparagine glycan is attached at N103. Residues C119 to C170 enclose the BPTI/Kunitz inhibitor domain. 3 disulfides stabilise this stretch: C119–C170, C128–C152, and C144–C166. Positions Y201–G220 are disordered. Residues G211–G220 are compositionally biased toward gly residues. The Laminin G-like 1 domain maps to K242–C438. N249 carries N-linked (GlcNAc...) asparagine glycosylation. Cystine bridges form between C405–C438, C442–C455, C449–C464, and C466–C476. An EGF-like 1 domain is found at S439–D477. Laminin G-like domains are found at residues A481–V664 and E660–C839. N-linked (GlcNAc...) asparagine glycosylation is found at N542, N571, and N741. Cystine bridges form between C808–C839, C845–C857, C851–C866, and C868–C878. The 39-residue stretch at Y841–H879 folds into the EGF-like 2 domain. N-linked (GlcNAc...) asparagine glycosylation is found at N925, N1000, N1019, and N1026. The Laminin G-like 4 domain occupies Y1087–C1259. Cystine bridges form between C1231/C1259, C1263/C1274, C1268/C1283, and C1285/C1296. In terms of domain architecture, EGF-like 3 spans K1260–E1297. Residues R1316 to C1526 form the Laminin G-like 5 domain. N1393 carries N-linked (GlcNAc...) asparagine glycosylation. Cystine bridges form between C1494/C1526, C1530/C1541, C1535/C1552, and C1554/C1564. Residues Q1527–S1565 enclose the EGF-like 4 domain. Residues G1569–C1765 form the Laminin G-like 6 domain. N-linked (GlcNAc...) asparagine glycans are attached at residues N1667, N1707, N1751, and N1782. C1722 and C1765 are joined by a disulfide. Residues V1817–V1837 traverse the membrane as a helical segment. Over Y1838 to D2179 the chain is Cytoplasmic. Disordered regions lie at residues Y1891 to F2141 and S2156 to D2179. The span at G1916 to S1930 shows a compositional bias: polar residues. Positions E1940–A1949 are enriched in acidic residues. A compositionally biased stretch (basic and acidic residues) spans A1954–A1966. 2 stretches are compositionally biased toward polar residues: residues T1969 to P1981 and E2010 to Q2025. The segment covering P2064 to A2079 has biased composition (basic and acidic residues). Low complexity predominate over residues Q2082–Q2091. Polar residues-rich tracts occupy residues S2092–P2105 and P2165–D2179.

Its subcellular location is the cell projection. The protein localises to the axon. It localises to the membrane. May have serine protease inhibitor activity. Might play a role in the glial-neuronal signaling pathway that is important in establishing the electrical properties of axonal membranes. This Drosophila melanogaster (Fruit fly) protein is Axotactin.